A 328-amino-acid polypeptide reads, in one-letter code: Putative glycosyltransferase 41 (328 aa).

Belongs to the glycosyltransferase group 1 family. Glycosyltransferase 4 subfamily.

This is Putative glycosyltransferase 41 (SIFV0041) from Sulfolobus islandicus filamentous virus (isolate Iceland/Hveragerdi) (SIFV).